Reading from the N-terminus, the 96-residue chain is Putative pterin-4-alpha-carbinolamine dehydratase (96 aa).

The protein belongs to the pterin-4-alpha-carbinolamine dehydratase family.

It catalyses the reaction (4aS,6R)-4a-hydroxy-L-erythro-5,6,7,8-tetrahydrobiopterin = (6R)-L-erythro-6,7-dihydrobiopterin + H2O. The chain is Putative pterin-4-alpha-carbinolamine dehydratase from Prochlorococcus marinus (strain MIT 9301).